The chain runs to 159 residues: uncharacterized protein (159 aa).

Disordered stretches follow at residues 1-23 (MEQD…KGQA) and 91-110 (AGGG…GPAA).

This is an uncharacterized protein from Homo sapiens (Human).